Here is a 155-residue protein sequence, read N- to C-terminus: Transcriptional repressor NrdR (155 aa).

The segment at 3 to 34 (CPFCGNIDTQVKDSRPAEDHVSIRRRRFCPAC) is a zinc-finger region. The region spanning 49 to 139 (LVVIKSSGKR…VYKNFQAADD (91 aa)) is the ATP-cone domain.

The protein belongs to the NrdR family. The cofactor is Zn(2+).

Functionally, negatively regulates transcription of bacterial ribonucleotide reductase nrd genes and operons by binding to NrdR-boxes. The sequence is that of Transcriptional repressor NrdR from Cereibacter sphaeroides (strain ATCC 17029 / ATH 2.4.9) (Rhodobacter sphaeroides).